A 149-amino-acid polypeptide reads, in one-letter code: Transcriptional repressor NrdR (149 aa).

A zinc finger spans residues 3-34; the sequence is CPFCSENDTKVIDSRLVADGHQVRRRRQCLAC. The 91-residue stretch at 49–139 folds into the ATP-cone domain; the sequence is PKVIKSNGNR…VYRSFEDIRE (91 aa).

It belongs to the NrdR family. It depends on Zn(2+) as a cofactor.

Negatively regulates transcription of bacterial ribonucleotide reductase nrd genes and operons by binding to NrdR-boxes. The protein is Transcriptional repressor NrdR of Vibrio parahaemolyticus serotype O3:K6 (strain RIMD 2210633).